The primary structure comprises 188 residues: MVKIAIFASGSGSNFENIVEHVESGKLENIEVTALYTDHQNAFCIDRAKKHDIPVYINEPKQFDSKAAYEQHLVSLLNEDKVEWIILAGYMRLIGPDLLASFEGKILNIHPSLLPKYKGIDAIGQAYHSGDTITGSTVHYVDCGMDTGEIIEQRQCDIRPDDSKEQLEEKVKKLEYELYPSVIAKIVK.

12-14 (GSN) contacts N(1)-(5-phospho-beta-D-ribosyl)glycinamide. (6R)-10-formyltetrahydrofolate is bound by residues Lys66, 91–94 (MRLI), and Asn108. His110 acts as the Proton donor in catalysis.

The protein belongs to the GART family.

It catalyses the reaction N(1)-(5-phospho-beta-D-ribosyl)glycinamide + (6R)-10-formyltetrahydrofolate = N(2)-formyl-N(1)-(5-phospho-beta-D-ribosyl)glycinamide + (6S)-5,6,7,8-tetrahydrofolate + H(+). The protein operates within purine metabolism; IMP biosynthesis via de novo pathway; N(2)-formyl-N(1)-(5-phospho-D-ribosyl)glycinamide from N(1)-(5-phospho-D-ribosyl)glycinamide (10-formyl THF route): step 1/1. Its function is as follows. Catalyzes the transfer of a formyl group from 10-formyltetrahydrofolate to 5-phospho-ribosyl-glycinamide (GAR), producing 5-phospho-ribosyl-N-formylglycinamide (FGAR) and tetrahydrofolate. In Staphylococcus aureus (strain MSSA476), this protein is Phosphoribosylglycinamide formyltransferase.